We begin with the raw amino-acid sequence, 295 residues long: Ubiquitin-conjugating enzyme E2-34 kDa (295 aa).

The UBC core domain occupies 7 to 169 (TASSLLLRQY…VKMEVERSKQ (163 aa)). Cys-95 acts as the Glycyl thioester intermediate in catalysis. The segment at 185–295 (ISQSKLDEPE…EDVERVSKKI (111 aa)) is disordered. At Ser-186 the chain carries Phosphoserine. Over residues 189–200 (KLDEPESNKDMA) the composition is skewed to basic and acidic residues. Composition is skewed to acidic residues over residues 207-226 (SDLDDDENGSVILQDDDYDD) and 234-265 (EDDDVYNYNDNDDDDERIEFEDDDDDDDDSID). Residues 269–279 (VMDRKQPHKAE) show a composition bias toward basic and acidic residues. Phosphoserine is present on residues Ser-282 and Ser-292.

The protein belongs to the ubiquitin-conjugating enzyme family. In terms of assembly, interacts with CDC53. Component of the E3 ubiquitin ligase complexes SCF with CDC53, SKP1/CBF3D, HRT1 and some F-box proteins like MET30 and CDC4.

The protein resides in the cytoplasm. The protein localises to the nucleus. The enzyme catalyses S-ubiquitinyl-[E1 ubiquitin-activating enzyme]-L-cysteine + [E2 ubiquitin-conjugating enzyme]-L-cysteine = [E1 ubiquitin-activating enzyme]-L-cysteine + S-ubiquitinyl-[E2 ubiquitin-conjugating enzyme]-L-cysteine.. The protein operates within protein modification; protein ubiquitination. Functionally, catalyzes the covalent attachment of ubiquitin to other proteins. Capable, in vitro, to ubiquitinate histone H2A. Mediates the initiation of DNA replication (transition of G1 to S phase in cell cycle). Essential component of the E3 ubiquitin ligase complex SCF (SKP1-CUL1-F-box protein), which mediates the ubiquitination and subsequent proteasomal degradation of target proteins. Involved in the regulation of methionine biosynthesis genes and in the degradation of CDC6 together with CDC4 and CDC53. The polypeptide is Ubiquitin-conjugating enzyme E2-34 kDa (CDC34) (Saccharomyces cerevisiae (strain ATCC 204508 / S288c) (Baker's yeast)).